Consider the following 262-residue polypeptide: Acyl-[acyl-carrier-protein]--UDP-N-acetylglucosamine O-acyltransferase (262 aa).

The protein belongs to the transferase hexapeptide repeat family. LpxA subfamily. Homotrimer.

The protein resides in the cytoplasm. The catalysed reaction is a (3R)-hydroxyacyl-[ACP] + UDP-N-acetyl-alpha-D-glucosamine = a UDP-3-O-[(3R)-3-hydroxyacyl]-N-acetyl-alpha-D-glucosamine + holo-[ACP]. The protein operates within glycolipid biosynthesis; lipid IV(A) biosynthesis; lipid IV(A) from (3R)-3-hydroxytetradecanoyl-[acyl-carrier-protein] and UDP-N-acetyl-alpha-D-glucosamine: step 1/6. Its function is as follows. Involved in the biosynthesis of lipid A, a phosphorylated glycolipid that anchors the lipopolysaccharide to the outer membrane of the cell. The protein is Acyl-[acyl-carrier-protein]--UDP-N-acetylglucosamine O-acyltransferase of Mannheimia succiniciproducens (strain KCTC 0769BP / MBEL55E).